Reading from the N-terminus, the 536-residue chain is Cytochrome P450 monooxygenase fscF (536 aa).

Residues 9-29 traverse the membrane as a helical segment; it reads VSWLCALFTAIALYCIAVAFY. A heme-binding site is contributed by Cys464.

The protein belongs to the cytochrome P450 family. Requires heme as cofactor.

It localises to the membrane. Its pathway is secondary metabolite biosynthesis. Functionally, cytochrome P450 monooxygenase; part of the fragmented gene cluster that mediates the biosynthesis of fusarochromene, a tryptophan-derived metabolite closely related to a group of mycotoxins including fusarochromanone. Within the pathway, fscF catalyzes the epoxidation of desacetylfusarochromene which opens the way to the production of fusarochromanones. The first step of the pathway is the epimerization of L-tryptophan to D-tryptophan in the presence of the NRPS-like tryptophan epimerase fscC. D-tryptophan is subsequently hydroxylated by the tryptophan 6-hydroxylase fscE to yield 6-hydroxytryptophan. The pyrrole ring undergoes cleavaged by the tryptophan 2,3-dioxygenase fscD and is finally converted to 4-hydroxykyrunenine by the hydrolase fscH. The NRPS-like oxidoreductase fscA reduces the carboxyl group to primary alcohol and the DMATS-type prenyltransferase fscG performs prenylation, followed by the formation of a chromene ring catalyzed by the oxidoreductase fscI, which leads to desacetylfusarochromene. Epoxidation by fscF and rearrangement reactions of chromene double bonds convert compound desacetylfusarochromene to fusarochromanones. Although specific acetyltransferases were not found near the fsc gene cluster, several predicted enzymes containing the N-acetyltransferase superfamily domain are present in the genome of F.equiseti. These predicted enzymes may have the potential to convert desacetylfusarochromene to fusarochromene. The sequence is that of Cytochrome P450 monooxygenase fscF from Fusarium equiseti (Fusarium scirpi).